The chain runs to 320 residues: Prophage side tail fiber protein homolog StfQ (320 aa).

Disordered stretches follow at residues 147–213 and 241–270; these read SGRA…HKSS and TTSG…TAAS. Polar residues-rich tracts occupy residues 172-206 and 241-258; these read DLGT…NSAG and TTSG…SSDG. Positions 261–270 are enriched in low complexity; it reads THSLSGTAAS.

Belongs to the tail fiber family.

This chain is Prophage side tail fiber protein homolog StfQ (stfQ), found in Escherichia coli (strain K12).